A 220-amino-acid polypeptide reads, in one-letter code: Tumor protein D54 (220 aa).

Met-1 is subject to N-acetylmethionine. A phosphoserine mark is found at Ser-3, Ser-12, and Ser-19. Residues 40–82 (GLTEGEEEELRAELAKVEEEIVTLRQVLAAKERHCGELKRRLG) are a coiled coil. Phosphoserine is present on residues Ser-96, Ser-149, Ser-168, and Ser-175. Thr-177 is subject to Phosphothreonine. The residue at position 180 (Ser-180) is a Phosphoserine. Thr-187 is subject to Phosphothreonine. The disordered stretch occupies residues 189–220 (KSKVVGGRENGSDNLPPSPGSGDQTLPDHAPF). 2 positions are modified to phosphoserine: Ser-206 and Ser-209.

Belongs to the TPD52 family. As to quaternary structure, forms a homodimer or heterodimer with other members of the family. Interacts with MAL2.

This is Tumor protein D54 (Tpd52l2) from Mus musculus (Mouse).